The primary structure comprises 523 residues: MTLQEEIKKRRTFAIISHPDAGKTTITEQLLKFGGAIREAGTVKARKTGNFAKSDWMDIEKERGISVTSSVMQFDYAGKRVNILDTPGHEDFSEDTYRTLMAVDAAVMVIDSAKGIEAQTKKLFQVVKRRGIPVFTFINKLDRDGREPLDLLSELEEILGIASVPMNWPIGMGKNFQGLYDFTHGRVEVYQPEDGKRFVEFDENGEVPASHPLTKNPFFTQALEDAELLLDAGNQFSEEEVVAGQLTPVFFGSALTSFGVETFLETFLEYAPEPHSHKTVDEEEIEPLNPDFSGFIFKIQANMDPRHRDRIAFVRIVSGEFERGMDVNLIRTGKKVKLSNVTQFMAESRENVENAVAGDIIGVYDTGTYQVGDTLTTGKLKKSFEPLPTFTPELFMRVQAKNVMKQKSFQKGIDQLVQEGAIQLYKSYTTGDIMLGAVGQLQFEVFKDRMEREYNSETIMTPMGTKTVRWIKEEDLDEKMSSSRNILARDRFDHPLFLFENEFAMRWFKDKYPDVELMEQFSV.

In terms of domain architecture, tr-type G spans 8–275; it reads KKRRTFAIIS…TFLEYAPEPH (268 aa). GTP contacts are provided by residues 17-24, 85-89, and 139-142; these read SHPDAGKT, DTPGH, and NKLD.

It belongs to the TRAFAC class translation factor GTPase superfamily. Classic translation factor GTPase family. PrfC subfamily.

It localises to the cytoplasm. In terms of biological role, increases the formation of ribosomal termination complexes and stimulates activities of RF-1 and RF-2. It binds guanine nucleotides and has strong preference for UGA stop codons. It may interact directly with the ribosome. The stimulation of RF-1 and RF-2 is significantly reduced by GTP and GDP, but not by GMP. The chain is Peptide chain release factor 3 (prfC) from Lactococcus lactis subsp. lactis (strain IL1403) (Streptococcus lactis).